Consider the following 106-residue polypeptide: Transcriptional and immune response regulator (106 aa).

In terms of assembly, monomer. Interacts with NOTCH2 (via ANK repeats), the interaction inhibits the nuclear translocation of NOTCH2 N2ICD. Interacts (C-terminus) with CBY1 (C-terminus), TCIM competes with CTNNB1 for the interaction with CBY1. In terms of tissue distribution, ubiquitous. Expressed in thyroid papillary carcinoma. Expressed in liver, expression levels decrease in hepatocellular carcinoma. Slightly detected in normal lung, its expression is highly induced in lung cancer cells (at protein level).

Its subcellular location is the cytoplasm. The protein resides in the nucleus. It localises to the nucleolus. It is found in the nucleus speckle. In terms of biological role, seems to be involved in the regulation of cell growth an differentiation, may play different and opposite roles depending on the tissue or cell type. May enhance the WNT-CTNNB1 pathway by relieving antagonistic activity of CBY1. Enhances the proliferation of follicular dendritic cells. Plays a role in the mitogen-activated MAPK2/3 signaling pathway, positively regulates G1-to-S-phase transition of the cell cycle. In endothelial cells, enhances key inflammatory mediators and inflammatory response through the modulation of NF-kappaB transcriptional regulatory activity. Involved in the regulation of heat shock response, seems to play a positive feedback with HSF1 to modulate heat-shock downstream gene expression. Plays a role in the regulation of hematopoiesis even if the mechanisms are unknown. In cancers such as thyroid or lung cancer, it has been described as promoter of cell proliferation, G1-to-S-phase transition and inhibitor of apoptosis. However, it negatively regulates self-renewal of liver cancer cells via suppresion of NOTCH2 signaling. The chain is Transcriptional and immune response regulator from Homo sapiens (Human).